Here is an 890-residue protein sequence, read N- to C-terminus: Alanine--tRNA ligase (890 aa).

4 residues coordinate Zn(2+): H572, H576, C674, and H678.

The protein belongs to the class-II aminoacyl-tRNA synthetase family. Requires Zn(2+) as cofactor.

The protein resides in the cytoplasm. The catalysed reaction is tRNA(Ala) + L-alanine + ATP = L-alanyl-tRNA(Ala) + AMP + diphosphate. In terms of biological role, catalyzes the attachment of alanine to tRNA(Ala) in a two-step reaction: alanine is first activated by ATP to form Ala-AMP and then transferred to the acceptor end of tRNA(Ala). Also edits incorrectly charged Ser-tRNA(Ala) and Gly-tRNA(Ala) via its editing domain. The polypeptide is Alanine--tRNA ligase (Prochlorococcus marinus (strain MIT 9211)).